A 333-amino-acid chain; its full sequence is Ornithine carbamoyltransferase (333 aa).

Carbamoyl phosphate contacts are provided by residues 56-59 (STRT), Arg107, and 134-137 (HPTQ). Residues Asn167, Asp231, and 235–236 (SM) each bind L-ornithine. Carbamoyl phosphate-binding positions include 273–274 (CL) and Arg318.

Belongs to the aspartate/ornithine carbamoyltransferase superfamily. OTCase family.

It localises to the cytoplasm. The enzyme catalyses carbamoyl phosphate + L-ornithine = L-citrulline + phosphate + H(+). Its pathway is amino-acid degradation; L-arginine degradation via ADI pathway; carbamoyl phosphate from L-arginine: step 2/2. Functionally, reversibly catalyzes the transfer of the carbamoyl group from carbamoyl phosphate (CP) to the N(epsilon) atom of ornithine (ORN) to produce L-citrulline. In Clostridium botulinum (strain Kyoto / Type A2), this protein is Ornithine carbamoyltransferase.